We begin with the raw amino-acid sequence, 118 residues long: Basic phospholipase A2 1 (118 aa).

7 disulfide bridges follow: C11–C72, C26–C117, C28–C44, C43–C98, C50–C91, C60–C84, and C78–C89. The Ca(2+) site is built by Y27, G29, and G31. H47 is an active-site residue. D48 contributes to the Ca(2+) binding site. Residue D92 is part of the active site.

The protein belongs to the phospholipase A2 family. Group I subfamily. D49 sub-subfamily. Requires Ca(2+) as cofactor. As to expression, expressed by the venom gland.

It localises to the secreted. The enzyme catalyses a 1,2-diacyl-sn-glycero-3-phosphocholine + H2O = a 1-acyl-sn-glycero-3-phosphocholine + a fatty acid + H(+). In terms of biological role, PLA2 catalyzes the calcium-dependent hydrolysis of the 2-acyl groups in 3-sn-phosphoglycerides. This is Basic phospholipase A2 1 from Naja melanoleuca (Forest cobra).